A 670-amino-acid polypeptide reads, in one-letter code: UvrABC system protein B (670 aa).

In terms of domain architecture, Helicase ATP-binding spans 26 to 183 (EGLEDGLAHQ…RRLAELQYSR (158 aa)). Residue 39 to 46 (GVTGSGKT) participates in ATP binding. A Beta-hairpin motif is present at residues 92–115 (YYDYYQPEAYVPSSDTFIEKDASV). One can recognise a Helicase C-terminal domain in the interval 431–597 (QVDDLLSEIR…GLNKKISDIL (167 aa)). Residues 630 to 665 (ELKIRELESKMLTHAQNLEFEEAAALRDELQALRAQ) enclose the UVR domain.

The protein belongs to the UvrB family. Forms a heterotetramer with UvrA during the search for lesions. Interacts with UvrC in an incision complex.

The protein localises to the cytoplasm. In terms of biological role, the UvrABC repair system catalyzes the recognition and processing of DNA lesions. A damage recognition complex composed of 2 UvrA and 2 UvrB subunits scans DNA for abnormalities. Upon binding of the UvrA(2)B(2) complex to a putative damaged site, the DNA wraps around one UvrB monomer. DNA wrap is dependent on ATP binding by UvrB and probably causes local melting of the DNA helix, facilitating insertion of UvrB beta-hairpin between the DNA strands. Then UvrB probes one DNA strand for the presence of a lesion. If a lesion is found the UvrA subunits dissociate and the UvrB-DNA preincision complex is formed. This complex is subsequently bound by UvrC and the second UvrB is released. If no lesion is found, the DNA wraps around the other UvrB subunit that will check the other stand for damage. The protein is UvrABC system protein B of Pectobacterium carotovorum subsp. carotovorum (strain PC1).